The primary structure comprises 342 residues: N-acetyl-gamma-glutamyl-phosphate reductase (342 aa).

Residue Cys147 is part of the active site.

This sequence belongs to the NAGSA dehydrogenase family. Type 1 subfamily.

It localises to the cytoplasm. It carries out the reaction N-acetyl-L-glutamate 5-semialdehyde + phosphate + NADP(+) = N-acetyl-L-glutamyl 5-phosphate + NADPH + H(+). It participates in amino-acid biosynthesis; L-arginine biosynthesis; N(2)-acetyl-L-ornithine from L-glutamate: step 3/4. Functionally, catalyzes the NADPH-dependent reduction of N-acetyl-5-glutamyl phosphate to yield N-acetyl-L-glutamate 5-semialdehyde. The chain is N-acetyl-gamma-glutamyl-phosphate reductase from Campylobacter jejuni (strain RM1221).